Here is a 410-residue protein sequence, read N- to C-terminus: Aspartic proteinase Asp1 (410 aa).

Residues 1 to 23 form the signal peptide; sequence MTARLALLASLLLLLQLVPPSSA. A propeptide spans 24–46 (removed in mature form); that stretch reads VVLELHGNVYPIGHFFITMNIGD. Residues 38 to 392 form the Peptidase A1 domain; sequence FFITMNIGDP…DSERSLLGWV (355 aa). Catalysis depends on residues Asp-56 and Asp-257.

This sequence belongs to the peptidase A1 family.

In Oryza sativa subsp. japonica (Rice), this protein is Aspartic proteinase Asp1 (ASP1).